A 516-amino-acid chain; its full sequence is GMP synthase [glutamine-hydrolyzing] (516 aa).

The 197-residue stretch at 7–203 (SVIVLDFGSQ…LIDIAGITPD (197 aa)) folds into the Glutamine amidotransferase type-1 domain. Catalysis depends on C84, which acts as the Nucleophile. Catalysis depends on residues H177 and E179. The 188-residue stretch at 204–391 (WSPKSFIQHQ…LGIAEDILMR (188 aa)) folds into the GMPS ATP-PPase domain. 231–237 (SGGVDST) is a binding site for ATP.

As to quaternary structure, homodimer.

The catalysed reaction is XMP + L-glutamine + ATP + H2O = GMP + L-glutamate + AMP + diphosphate + 2 H(+). It functions in the pathway purine metabolism; GMP biosynthesis; GMP from XMP (L-Gln route): step 1/1. Functionally, catalyzes the synthesis of GMP from XMP. The sequence is that of GMP synthase [glutamine-hydrolyzing] from Chlorobaculum tepidum (strain ATCC 49652 / DSM 12025 / NBRC 103806 / TLS) (Chlorobium tepidum).